A 338-amino-acid polypeptide reads, in one-letter code: Nicotinate-nucleotide--dimethylbenzimidazole phosphoribosyltransferase (338 aa).

The Proton acceptor role is filled by Glu-306.

This sequence belongs to the CobT family.

It carries out the reaction 5,6-dimethylbenzimidazole + nicotinate beta-D-ribonucleotide = alpha-ribazole 5'-phosphate + nicotinate + H(+). Its pathway is nucleoside biosynthesis; alpha-ribazole biosynthesis; alpha-ribazole from 5,6-dimethylbenzimidazole: step 1/2. Its function is as follows. Catalyzes the synthesis of alpha-ribazole-5'-phosphate from nicotinate mononucleotide (NAMN) and 5,6-dimethylbenzimidazole (DMB). The protein is Nicotinate-nucleotide--dimethylbenzimidazole phosphoribosyltransferase of Cereibacter sphaeroides (strain KD131 / KCTC 12085) (Rhodobacter sphaeroides).